We begin with the raw amino-acid sequence, 182 residues long: MPRLFSYLLGVWLLLSQLPREIPGQSTNDFIKACGRELVRLWVEICGSVSWGRTALSLEEPQLETGPPAETMPSSITKDAEILKMMLEFVPNLPQELKATLSERQPSLRELQQSASKDSNLNFEEFKKIILNRQNEAEDKSLLELKNLGLDKHSRKKRLFRMTLSEKCCQVGCIRKDIARLC.

An N-terminal signal peptide occupies residues M1 to G24. Pyrrolidone carboxylic acid is present on Q25. 3 disulfides stabilise this stretch: C34–C169, C46–C182, and C168–C173. The propeptide at S57 to S154 is connecting peptide. A propeptide spanning residues L159–F160 is cleaved from the precursor.

This sequence belongs to the insulin family. In terms of assembly, heterodimer of a B chain and an A chain linked by two disulfide bonds.

It is found in the secreted. In terms of biological role, relaxin is an ovarian hormone that acts with estrogen to produce dilatation of the birth canal in many mammals. The sequence is that of Prorelaxin (RLN) from Sus scrofa (Pig).